The following is a 119-amino-acid chain: Circadian clock oscillator protein KaiB (119 aa).

It belongs to the KaiB family. As to quaternary structure, the KaiABC complex composition changes during the circadian cycle to control KaiC phosphorylation. Complexes KaiC(6), KaiA(2-4):KaiC(6), KaiB(6):KaiC(6) and KaiC(6):KaiB(6):KaiA(12) are among the most important forms, many form cooperatively. Undergoes a major conformational rearrangment; in the free state forms homotetramers as a dimer of dimers. When bound to the CI domain of KaiC switches to a monomeric thioredoxin-fold (KaiB(fs)). KaiB(fs) binds CikA, leading it to dephosphorylate phospho-RpaA.

In terms of biological role, key component of the KaiABC oscillator complex, which constitutes the main circadian regulator in cyanobacteria. Complex composition changes during the circadian cycle to control KaiC phosphorylation. KaiA stimulates KaiC autophosphorylation, while KaiB sequesters KaiA, leading to KaiC autodephosphorylation. Phospho-Ser-431 KaiC accumulation triggers binding of KaiB to form the KaiB(6):KaiC(6) complex, leading to changes in output regulators CikA and SasA. KaiB switches to a thioredoxin-like fold (KaiB(fs)) when bound to KaiC. KaiB(6):KaiC(6) formation exposes a site for KaiA binding that sequesters KaiA from KaiC, making the KaiC(6):KaiB(6):KaiA(12) complex that results in KaiC autodephosphorylation. A metamorphic protein which reversibly switches between an inactive tetrameric fold and a rare, thioredoxin-like monomeric fold (KaiB(fs)). KaiB(fs) binds phospho-KaiC, KaiA and CikA. KaiA and CikA compete for binding to KaiB(fs), and KaiB(fs) and SasA compete for binding to KaiC, thus the clock oscillator and output signal pathway are tightly coupled. The protein is Circadian clock oscillator protein KaiB of Synechococcus sp. (strain CC9311).